A 183-amino-acid chain; its full sequence is MTTILTVRKGNQVVVGGDGQVSLGNTVMKGNARKVRRLYRGEVIAGFAGGTADAFTLFERFEGQLEKHQGHLVRAAVDLAKDWRSDRALRKLEAMLIVANKESTLIITGTGDVVEPQHGALAIGSGGNFAEAAARALIDNTDLTAKEIVEKSLNIAADICVFTNHSLTIEEITIDAQLEDKSK.

T2 is an active-site residue. Positions 157, 160, and 163 each coordinate Na(+).

It belongs to the peptidase T1B family. HslV subfamily. In terms of assembly, a double ring-shaped homohexamer of HslV is capped on each side by a ring-shaped HslU homohexamer. The assembly of the HslU/HslV complex is dependent on binding of ATP.

The protein resides in the cytoplasm. The enzyme catalyses ATP-dependent cleavage of peptide bonds with broad specificity.. Allosterically activated by HslU binding. Its function is as follows. Protease subunit of a proteasome-like degradation complex believed to be a general protein degrading machinery. This is ATP-dependent protease subunit HslV from Marinomonas sp. (strain MWYL1).